A 276-amino-acid chain; its full sequence is Secretagogin (276 aa).

EF-hand domains follow at residues 12 to 47 (LDAACFWQIWQRFDKEEKGYIRETELDAFFDHLLAK), 58 to 93 (NVQKVKEQLMTSHNVSKEGRILMKELASMFLSEDEN), 105 to 140 (DNSVEFMQIWRKYDADSSGFISAAELCNFLRDLFLH), 149 to 184 (ELEEYTSTMMKIFDKNKDGRLDLNDLARILALQENF), 197 to 232 (ERKRDFEKIFAHYDVSKTGALEGPEVDGFVKDMMEL), and 240 to 276 (VDLDKFREILLRHCDVNKDGKIQKSELALCLGLKINP). Positions 25, 31, 36, 73, 75, 77, 82, 118, 120, 122, 129, 162, 164, 166, 168, 173, 210, 212, 214, 221, 254, 256, 258, 260, and 265 each coordinate Ca(2+).

It is found in the cytoplasm. Its subcellular location is the secreted. The protein localises to the cytoplasmic vesicle. The protein resides in the secretory vesicle membrane. This chain is Secretagogin (Scgn), found in Mus musculus (Mouse).